Consider the following 353-residue polypeptide: Photosystem II D2 protein (353 aa).

N-acetylthreonine is present on T2. T2 is modified (phosphothreonine). Residues 41–61 (CAYFALGGWFTGTTFVTSWYT) form a helical membrane-spanning segment. H118 provides a ligand contact to chlorophyll a. A helical membrane pass occupies residues 125 to 141 (GFMLRQFELARSVQLRP). Q130 and N143 together coordinate pheophytin a. Residues 153 to 166 (VFVSVFLIYPLGQS) traverse the membrane as a helical segment. Chlorophyll a is bound at residue H198. The chain crosses the membrane as a helical span at residues 208–228 (AALLCAIHGATVENTLFEDGD). The a plastoquinone site is built by H215 and F262. H215 contacts Fe cation. H269 provides a ligand contact to Fe cation. The chain crosses the membrane as a helical span at residues 279–295 (GLWMSALGVVGLALNLR).

The protein belongs to the reaction center PufL/M/PsbA/D family. PSII is composed of 1 copy each of membrane proteins PsbA, PsbB, PsbC, PsbD, PsbE, PsbF, PsbH, PsbI, PsbJ, PsbK, PsbL, PsbM, PsbT, PsbX, PsbY, PsbZ, Psb30/Ycf12, at least 3 peripheral proteins of the oxygen-evolving complex and a large number of cofactors. It forms dimeric complexes. The D1/D2 heterodimer binds P680, chlorophylls that are the primary electron donor of PSII, and subsequent electron acceptors. It shares a non-heme iron and each subunit binds pheophytin, quinone, additional chlorophylls, carotenoids and lipids. There is also a Cl(-1) ion associated with D1 and D2, which is required for oxygen evolution. The PSII complex binds additional chlorophylls, carotenoids and specific lipids. serves as cofactor.

Its subcellular location is the plastid. The protein localises to the chloroplast thylakoid membrane. It carries out the reaction 2 a plastoquinone + 4 hnu + 2 H2O = 2 a plastoquinol + O2. Functionally, photosystem II (PSII) is a light-driven water:plastoquinone oxidoreductase that uses light energy to abstract electrons from H(2)O, generating O(2) and a proton gradient subsequently used for ATP formation. It consists of a core antenna complex that captures photons, and an electron transfer chain that converts photonic excitation into a charge separation. The D1/D2 (PsbA/PsbD) reaction center heterodimer binds P680, the primary electron donor of PSII as well as several subsequent electron acceptors. D2 is needed for assembly of a stable PSII complex. The polypeptide is Photosystem II D2 protein (Barbarea verna (Land cress)).